Reading from the N-terminus, the 1131-residue chain is MATTSTSNMSRNGGFCGALQRAPPPMPPTLIRRLSSRECYGVGKVKVMLRVADRDRNSGGTEPDFMALDKKKRQVTLTDPRTACPPPQAAQERAPMVAAPKMFAFDNLFTGEDKQSDVCASALSEVIPAVLEGSDGCLLAMGYPATGQAQTVLGELGGGSGSGSASGSGVACSLGAAPCAIAWLYKGIQERRQKSGARFSVRVSAVGVSATKPDALSQDLLISHAAESDDSPGIYLRDDFLGGPTELRAPTAERAALFLDSALAGRLKSSGSTASGSSGCAAPLESALIFTLHVYQYSLSRKGGVAGGRSRLHIIDLGGCANRNGGLPLSGIGNILLAILSGQRHPPHKDHPLTPLLKDCLAPITCHVAIVAHVRPEQSYQDALSTIQIASRIHRLRRRKHRVPMPLAVGLAQGLGGNGSSAGSGADPSSSEISADTVIYMGPNDDATDGEHPPVYLPSLTAGDNRGVMSKALKGSGLEKPPSKSASNSPMMMKKAMAAEKAKKLPGSHTGSLKRQAGAGACSSPMIPHEQPQIQAMGSPIPIPRHMVSKGSMVPSPKGSPMRRAHPGAALEQLEAGMRKITEEQWIDGPRVSRAKVAEARHLMREVNHVKQCETWVDGPKSQSCRSLTACNLPAAGGSQTQGYGFMDAHKKTMIRQWVENQTTQVFQSTVSASNSPTALHWKLSQLKQKSLDLPDRPAFNPEPSLDLNQPCFESLPLLDPAPPDGDEDEDSGPSEVPPALPLLDDPLGSRDISQDNLHRMLSRHVSREQLHEAELVASRASSSHHPSQRSIDCGLQVTEEEIARTMSRDRDHDPSAHPLSALSHCDNISFVSSFNMACESFSECGERARQQFDQLARLHEIFTSQLAMAEVTPSAALFRTDIGSVFSEPVYHFNVGQSSVCSEPAYRLTPSPPKQPSHSPSQGSLPSLNGIMEIAGMDDYALLRQPDGASDPNLQKGEKRFTPQHDDICELDEKSMAAAVGKGNSLEDAQHKLNEITNILPLAAQSRLPLLPLNTSSEAYDSGHDSNSTPRTSKHSGISRRAESGYHSVATVRDSDESSFASGMSKGQRHRITVSGTGAVTSAGIGNYQRQCHKKRHRQDQAGNNKGLCNWLLTPFSCTYPETEGEISDF.

Positions 1–11 (MATTSTSNMSR) are enriched in polar residues. The interval 1–25 (MATTSTSNMSRNGGFCGALQRAPPP) is disordered. One can recognise a Kinesin motor domain in the interval 44-396 (KVKVMLRVAD…IQIASRIHRL (353 aa)). Disordered regions lie at residues 472–494 (ALKG…MMMK), 693–753 (DLPD…SRDI), 905–926 (PAYR…QGSL), and 1016–1072 (TSSE…QRHR). Over residues 483–494 (SKSASNSPMMMK) the composition is skewed to low complexity. Positions 1016-1032 (TSSEAYDSGHDSNSTPR) are enriched in polar residues.

Belongs to the TRAFAC class myosin-kinesin ATPase superfamily. Kinesin family. KIF26 subfamily.

It localises to the cytoplasm. Its subcellular location is the cytoskeleton. The protein is Kinesin-like protein CG14535 of Drosophila melanogaster (Fruit fly).